We begin with the raw amino-acid sequence, 122 residues long: Large ribosomal subunit protein uL14 (122 aa).

Belongs to the universal ribosomal protein uL14 family. As to quaternary structure, part of the 50S ribosomal subunit. Forms a cluster with proteins L3 and L19. In the 70S ribosome, L14 and L19 interact and together make contacts with the 16S rRNA in bridges B5 and B8.

Functionally, binds to 23S rRNA. Forms part of two intersubunit bridges in the 70S ribosome. The polypeptide is Large ribosomal subunit protein uL14 (Bacillus pumilus (strain SAFR-032)).